Reading from the N-terminus, the 505-residue chain is Peroxisome proliferator-activated receptor gamma (505 aa).

The O-linked (GlcNAc) threonine glycan is linked to T84. S112 is subject to Phosphoserine; by MAPK. Residues 136–210 (AIECRVCGDK…VGMSHNAIRF (75 aa)) constitute a DNA-binding region (nuclear receptor). NR C4-type zinc fingers lie at residues 139-159 (CRVC…CEGC) and 176-198 (CDLN…FQKC). The tract at residues 205–280 (HNAIRFGRMP…DKSPFVIYDM (76 aa)) is interaction with FAM120B. Residues 238–503 (DLRALAKHLY…HPLLQEIYKD (266 aa)) form the NR LBD domain. K252 participates in a covalent cross-link: Glycyl lysine isopeptide (Lys-Gly) (interchain with G-Cter in ubiquitin). Residues 495 to 503 (PLLQEIYKD) carry the 9aaTAD motif.

This sequence belongs to the nuclear hormone receptor family. NR1 subfamily. Interacts with FOXO1 (acetylated form). Heterodimer with other nuclear receptors, such as RXRA. The heterodimer with the retinoic acid receptor RXRA is called adipocyte-specific transcription factor ARF6. Interacts with NCOA6 coactivator, leading to a strong increase in transcription of target genes. Interacts with coactivator PPARBP, leading to a mild increase in transcription of target genes. Interacts with NOCA7 in a ligand-inducible manner. Interacts with NCOA1 and NCOA2 LXXLL motifs. Interacts with ASXL1, ASXL2, DNTTIP2, FAM120B, MAP2K1/MEK1, NR0B2, PDPK1, PRDM16, PRMT2 and TGFB1I1. Interacts (when activated by agonist) with PPP5C. Interacts with HELZ2 and THRAP3; the interaction stimulates the transcriptional activity of PPARG. Interacts with PER2, the interaction is ligand dependent and blocks PPARG recruitment to target promoters. Interacts with NOCT. Interacts with ACTN4. Interacts (when in the liganded conformation) with GPS2. Interacts with CRY1 and CRY2 in a ligand-dependent manner. In the absence of hormonal ligand, interacts with TACC1. In macrophages, interacts with PAQR3 and STUB1; the interactions promote PPARG poylubiquitination and STUB1-mediated degradation. Phosphorylated by MAPK. The phosphorylation inhibits PPAR gamma activity. In terms of processing, O-GlcNAcylation at Thr-84 reduces transcriptional activity in adipocytes. Post-translationally, phosphorylated at basal conditions and dephosphorylated when treated with the ligand. May be dephosphorylated by PPP5C. The phosphorylated form may be inactive and dephosphorylation at induces adipogenic activity. Ubiquitinated by E3 ubiquitin-protein ligase complex containing FBXO9; leading to proteasomal degradation. Ubiquitinated at Lys-252 by TRIM55 leading to proteasomal degradation. Ubiquitinated by E3 ubiquitin-protein ligase STUB1/CHIP; leading to proteasomal degradation. Highest expression in adipose tissue.

It localises to the nucleus. The protein resides in the cytoplasm. With respect to regulation, PDPK1 activates its transcriptional activity independently of its kinase activity. Nuclear receptor that binds peroxisome proliferators such as hypolipidemic drugs and fatty acids. Once activated by a ligand, the nuclear receptor binds to DNA specific PPAR response elements (PPRE) and modulates the transcription of its target genes, such as acyl-CoA oxidase. It therefore controls the peroxisomal beta-oxidation pathway of fatty acids. Key regulator of adipocyte differentiation and glucose homeostasis. ARF6 acts as a key regulator of the tissue-specific adipocyte P2 (aP2) enhancer. Acts as a critical regulator of gut homeostasis by suppressing NF-kappa-B-mediated pro-inflammatory responses. Plays a role in the regulation of cardiovascular circadian rhythms by regulating the transcription of BMAL1 in the blood vessels. In Rattus norvegicus (Rat), this protein is Peroxisome proliferator-activated receptor gamma (Pparg).